A 206-amino-acid polypeptide reads, in one-letter code: Max dimerization protein 3 (206 aa).

The interaction with SIN3A and SIN3B stretch occupies residues 8 to 25 (IQVLLQAAEFLERREREA). 2 disordered regions span residues 25–67 (AEHG…ELEK) and 146–171 (RERL…QEEL). The bHLH domain occupies 57-109 (SGRSVHNELEKRRRAQLKRCLERLKQQMPLGADCARYTTLSLLRRARMHIQKL).

Efficient DNA binding requires dimerization with another bHLH protein. Binds DNA as a heterodimer with MAX. Interacts with SIN3A AND SIN3B. Interacts with RNF17.

The protein resides in the nucleus. Its function is as follows. Transcriptional repressor. Binds with MAX to form a sequence-specific DNA-binding protein complex which recognizes the core sequence 5'-CAC[GA]TG-3'. Antagonizes MYC transcriptional activity by competing for MAX and suppresses MYC dependent cell transformation. In Homo sapiens (Human), this protein is Max dimerization protein 3 (MXD3).